The primary structure comprises 595 residues: Protein kinase C iota type (595 aa).

Over residues 1 to 12 (MPTQRDSSTMSH) the composition is skewed to polar residues. The segment at 1–21 (MPTQRDSSTMSHTVACGGGGD) is disordered. Position 2 is an N-acetylproline (Pro2). The segment at 2-28 (PTQRDSSTMSHTVACGGGGDHSHQVRV) is required for interaction with RAB2. A regulatory domain region spans residues 2-252 (PTQRDSSTMS…KASSSLGLQD (251 aa)). A Phosphothreonine modification is found at Thr3. Phosphoserine occurs at positions 7 and 8. Thr9 is subject to Phosphothreonine. Residues 25 to 108 (QVRVKAYYRG…SELLIHVFPC (84 aa)) form the PB1 domain. Positions 72 to 91 (DEEGDPCTVSSQLELEEAFR) are interaction with PARD6A. The short motif at 125–134 (YRRGARRWRK) is the Pseudosubstrate element. A Phorbol-ester/DAG-type zinc finger spans residues 140–190 (GHTFQAKRFNRRAHCAICTDRIWGLGRQGYKCINCKLLVHKKCHKLVTIEC). Positions 253–521 (FDLLRVIGRG…FADIQGHPFF (269 aa)) constitute a Protein kinase domain. 259–267 (IGRGSYAKV) is an ATP binding site. Phosphotyrosine; by SRC occurs at positions 264 and 279. Residue Lys282 coordinates ATP. Tyr333 is modified (phosphotyrosine; by SRC). The active-site Proton acceptor is the Asp377. Phosphothreonine is present on residues Thr411 and Thr563. In terms of domain architecture, AGC-kinase C-terminal spans 522–593 (RNVDWDMMEQ…INPLLMSAEE (72 aa)).

This sequence belongs to the protein kinase superfamily. AGC Ser/Thr protein kinase family. PKC subfamily. In terms of assembly, forms a complex with SQSTM1 and MP2K5. Interacts directly with SQSTM1. Interacts with IKBKB. Interacts with PARD6A, PARD6B and PARD6G. Part of a quaternary complex containing aPKC, PARD3, a PARD6 protein (PARD6A, PARD6B or PARD6G) and a GTPase protein (CDC42 or RAC1). Part of a complex with LLGL1 and PARD6B. Interacts with ADAP1/CENTA1. Interaction with SMG1, through the ZN-finger domain, activates the kinase activity. Interacts with CDK7. Forms a complex with RAB2A and GAPDH involved in recruitment onto the membrane of vesicular tubular clusters (VTCs). Interacts with ECT2 ('Thr-359' phosphorylated form). Interacts with VAMP2. Interacts with WDFY2 (via WD repeats 1-3). Phosphorylation at Thr-411 in the activation loop is not mandatory for activation. Upon neuronal growth factor (NGF) stimulation, phosphorylated by SRC at Tyr-264, Tyr-279 and Tyr-333. Phosphorylation on Tyr-264 facilitates binding to KPNB1/importin-beta regulating entry of PRKCI into the nucleus. Phosphorylation on Tyr-333 is important for NF-kappa-B stimulation. Phosphorylated at Thr-563 during the initial phase of long term potentiation.

The protein localises to the cytoplasm. The protein resides in the membrane. It is found in the endosome. It localises to the nucleus. The catalysed reaction is L-seryl-[protein] + ATP = O-phospho-L-seryl-[protein] + ADP + H(+). The enzyme catalyses L-threonyl-[protein] + ATP = O-phospho-L-threonyl-[protein] + ADP + H(+). With respect to regulation, atypical PKCs (PRKCI and PRKCZ) exhibit an elevated basal enzymatic activity (that may be due to the interaction with SMG1 or SQSTM1) and are not regulated by diacylglycerol, phosphatidylserine, phorbol esters or calcium ions. Two specific sites, Thr-411 (activation loop of the kinase domain) and Thr-563 (turn motif), need to be phosphorylated for its full activation. Might also be a target for novel lipid activators that are elevated during nutrient-stimulated insulin secretion. Calcium- and diacylglycerol-independent serine/ threonine-protein kinase that plays a general protective role against apoptotic stimuli, is involved in NF-kappa-B activation, cell survival, differentiation and polarity, and contributes to the regulation of microtubule dynamics in the early secretory pathway. Is necessary for BCR-ABL oncogene-mediated resistance to apoptotic drug in leukemia cells, protecting leukemia cells against drug-induced apoptosis. In cultured neurons, prevents amyloid beta protein-induced apoptosis by interrupting cell death process at a very early step. In glioblastoma cells, may function downstream of phosphatidylinositol 3-kinase (PI3K) and PDPK1 in the promotion of cell survival by phosphorylating and inhibiting the pro-apoptotic factor BAD. Can form a protein complex in non-small cell lung cancer (NSCLC) cells with PARD6A and ECT2 and regulate ECT2 oncogenic activity by phosphorylation, which in turn promotes transformed growth and invasion. In response to nerve growth factor (NGF), acts downstream of SRC to phosphorylate and activate IRAK1, allowing the subsequent activation of NF-kappa-B and neuronal cell survival. Functions in the organization of the apical domain in epithelial cells by phosphorylating EZR. This step is crucial for activation and normal distribution of EZR at the early stages of intestinal epithelial cell differentiation. Forms a protein complex with LLGL1 and PARD6B independently of PARD3 to regulate epithelial cell polarity. Plays a role in microtubule dynamics in the early secretory pathway through interaction with RAB2A and GAPDH and recruitment to vesicular tubular clusters (VTCs). In human coronary artery endothelial cells (HCAEC), is activated by saturated fatty acids and mediates lipid-induced apoptosis. Downstream of PI3K is required for insulin-stimulated glucose transport. Activates RAB4A and promotes its association with KIF3A which is required for the insulin-induced SLC2A4/GLUT4 translocation in adipocytes. Is essential in early embryogenesis and development of differentiating photoreceptors by playing a role in the establishment of epithelial and neuronal polarity. Involved in early synaptic long term potentiation phase in CA1 hippocampal cells and short term memory formation. This is Protein kinase C iota type (Prkci) from Mus musculus (Mouse).